Consider the following 237-residue polypeptide: 1-(5-phosphoribosyl)-5-[(5-phosphoribosylamino)methylideneamino] imidazole-4-carboxamide isomerase (237 aa).

The active-site Proton acceptor is aspartate 8. Aspartate 129 (proton donor) is an active-site residue.

This sequence belongs to the HisA/HisF family.

The protein localises to the cytoplasm. The enzyme catalyses 1-(5-phospho-beta-D-ribosyl)-5-[(5-phospho-beta-D-ribosylamino)methylideneamino]imidazole-4-carboxamide = 5-[(5-phospho-1-deoxy-D-ribulos-1-ylimino)methylamino]-1-(5-phospho-beta-D-ribosyl)imidazole-4-carboxamide. It functions in the pathway amino-acid biosynthesis; L-histidine biosynthesis; L-histidine from 5-phospho-alpha-D-ribose 1-diphosphate: step 4/9. The sequence is that of 1-(5-phosphoribosyl)-5-[(5-phosphoribosylamino)methylideneamino] imidazole-4-carboxamide isomerase from Alkaliphilus metalliredigens (strain QYMF).